The sequence spans 497 residues: 3-octaprenyl-4-hydroxybenzoate carboxy-lyase (497 aa).

Asparagine 175 provides a ligand contact to Mn(2+). Residues isoleucine 178–arginine 180, arginine 192–leucine 194, and arginine 197–glycine 198 each bind prenylated FMN. Glutamate 241 provides a ligand contact to Mn(2+). Aspartate 290 functions as the Proton donor in the catalytic mechanism.

This sequence belongs to the UbiD family. As to quaternary structure, homohexamer. It depends on prenylated FMN as a cofactor. Mn(2+) is required as a cofactor.

It localises to the cell membrane. The catalysed reaction is a 4-hydroxy-3-(all-trans-polyprenyl)benzoate + H(+) = a 2-(all-trans-polyprenyl)phenol + CO2. Its pathway is cofactor biosynthesis; ubiquinone biosynthesis. Functionally, catalyzes the decarboxylation of 3-octaprenyl-4-hydroxy benzoate to 2-octaprenylphenol, an intermediate step in ubiquinone biosynthesis. In Shigella boydii serotype 4 (strain Sb227), this protein is 3-octaprenyl-4-hydroxybenzoate carboxy-lyase.